Reading from the N-terminus, the 895-residue chain is uncharacterized protein (895 aa).

The disordered stretch occupies residues 257–283 (KSHKYPPGPPDNSSSNTSGQQNTSNTS). The segment covering 268–283 (NSSSNTSGQQNTSNTS) has biased composition (low complexity).

This is an uncharacterized protein from Acanthamoeba polyphaga mimivirus (APMV).